The sequence spans 204 residues: NADH-ubiquinone oxidoreductase subunit 9 (204 aa).

Belongs to the complex I 30 kDa subunit family. In terms of assembly, complex I is composed of about 30 different subunits.

Its subcellular location is the mitochondrion inner membrane. It catalyses the reaction a ubiquinone + NADH + 5 H(+)(in) = a ubiquinol + NAD(+) + 4 H(+)(out). Core subunit of the mitochondrial membrane respiratory chain NADH dehydrogenase (Complex I) that is believed to belong to the minimal assembly required for catalysis. Complex I functions in the transfer of electrons from NADH to the respiratory chain. The immediate electron acceptor for the enzyme is believed to be ubiquinone. The chain is NADH-ubiquinone oxidoreductase subunit 9 (NAD9) from Reclinomonas americana.